The following is a 1659-amino-acid chain: eIF-2-alpha kinase GCN2 (1659 aa).

In terms of domain architecture, RWD spans 17 to 128 (NELEAIRSIY…SFTQEKLDEF (112 aa)). Positions 149–170 (KEQLEKEEREKQQETIKKRSDE) are disordered. Protein kinase domains follow at residues 256–527 (LVKP…MKFL) and 599–981 (FEEI…SGWL). ATP is bound by residues 605-613 (LGQGAFGQV) and lysine 628. 2 disordered regions span residues 671–691 (NVFE…DFEE) and 727–768 (FENS…VPRR). Phosphoserine is present on serine 761. Residue aspartate 835 is the Proton acceptor of the active site. Phosphothreonine; by autocatalysis is present on residues threonine 882 and threonine 887. The segment at 999–1519 (NPSSPWQQQV…EFKRWDENSS (521 aa)) is histidyl-tRNA synthetase-like.

This sequence belongs to the protein kinase superfamily. Ser/Thr protein kinase family. GCN2 subfamily. As to quaternary structure, homodimer; homodimerization is important for kinase activation by uncharged tRNAs. Interacts (via N-terminal RWD domain) with GCN1 (via N- and C-terminus); this interaction stimulates GCN2 kinase activity in a GCN20-dependent manner in response to amino acid starvation. Interacts (via N-terminus) with the GCN1-GCN20 complex on translating ribosomes in amino acid-starved cells; GCN1 may bind near the ribosomal A-site and promotes the transfer of uncharged tRNAs from the A-site to the tRNA-binding domain in GCN2 for its subsequent kinase activation, and hence allowing GCN4 translational activation and derepression of amino acid biosynthetic genes. Interacts (via C-terminus) with TIF11; this interaction is direct, occurs in amino acid-repleted cells, may be stabilized in a ribosome-dependent manner, reduces GCN2-mediated eIF-2-alpha phosphorylation but not GCN2 autophosphorylation and is lost in amino acid-starved cells and by uncharged tRNAs. Associates (via C-terminus) with ribosomes. Requires Mg(2+) as cofactor. In terms of processing, autophosphorylated, autophosphorylation on Thr-882 and Thr-887 increases kinase activity.

The protein localises to the cytoplasm. The enzyme catalyses L-seryl-[protein] + ATP = O-phospho-L-seryl-[protein] + ADP + H(+). The catalysed reaction is L-threonyl-[protein] + ATP = O-phospho-L-threonyl-[protein] + ADP + H(+). Its activity is regulated as follows. The integrated stress response (ISR) is activated in response to conditions that promote ribosome collisions: GCN1, which acts as a ribosome collision sensor, activates GCN2. The RQC pathway and the integrated stress response (ISR) antagonize each other: HEL2 prevents the activation of GCN2, while GCN2 suppresses RQC activation. Ribosome stalling-induced integrated stress response prefers ribosomes with empty A sites. The kinase activity is stimulated upon binding to uncharged tRNAs. Functionally, metabolic-stress sensing protein kinase that phosphorylates the alpha subunit of eukaryotic translation initiation factor 2 (eIF-2-alpha/SUI2) on 'Ser-52' in response to low amino acid, carbon, or purine availability. Required for adapatation to nutrient starvation by acting as a key component of the integrated stress response (ISR), by which cells alter their translational and transcriptional output in response to starvation. Converts phosphorylated eIF-2-alpha/SUI2 either to a competitive inhibitor of translation initiation factor eIF-2B, leading to a global protein synthesis repression, and thus to a reduced overall utilization of amino acids, or to a translational initiation activation of specific mRNAs, such as the transcriptional activator GCN4, and hence allowing GCN4-mediated reprogramming of transcription to alleviate nutrient depletion. Binds uncharged tRNAs. Binds to aminoacylated tRNA(Phe) less tightly than to deacylated tRNA(Phe). Binds to double-stranded RNA. This chain is eIF-2-alpha kinase GCN2, found in Saccharomyces cerevisiae (strain ATCC 204508 / S288c) (Baker's yeast).